The sequence spans 159 residues: Ribosomal RNA large subunit methyltransferase H (159 aa).

Residues L76, G108, and 127-132 (FSKMTF) each bind S-adenosyl-L-methionine.

Belongs to the RNA methyltransferase RlmH family. As to quaternary structure, homodimer.

The protein resides in the cytoplasm. The catalysed reaction is pseudouridine(1915) in 23S rRNA + S-adenosyl-L-methionine = N(3)-methylpseudouridine(1915) in 23S rRNA + S-adenosyl-L-homocysteine + H(+). Functionally, specifically methylates the pseudouridine at position 1915 (m3Psi1915) in 23S rRNA. The protein is Ribosomal RNA large subunit methyltransferase H of Halalkalibacterium halodurans (strain ATCC BAA-125 / DSM 18197 / FERM 7344 / JCM 9153 / C-125) (Bacillus halodurans).